Here is a 1088-residue protein sequence, read N- to C-terminus: DNA polymerase delta catalytic subunit (1088 aa).

It belongs to the DNA polymerase type-B family. Heterodimer with subunits of 125 kDa and 50 kDa. The 125 kDa subunit contains the polymerase active site and most likely the active site for the 3'-5' exonuclease activity.

Its subcellular location is the nucleus. It catalyses the reaction DNA(n) + a 2'-deoxyribonucleoside 5'-triphosphate = DNA(n+1) + diphosphate. In terms of biological role, this polymerase possesses two enzymatic activities: DNA synthesis (polymerase) and an exonucleolytic activity that degrades single-stranded DNA in the 3'- to 5'-direction. The protein is DNA polymerase delta catalytic subunit (POLD1) of Glycine max (Soybean).